The following is a 100-amino-acid chain: Small ribosomal subunit protein uS14c (100 aa).

It belongs to the universal ribosomal protein uS14 family. As to quaternary structure, part of the 30S ribosomal subunit.

The protein localises to the plastid. The protein resides in the chloroplast. In terms of biological role, binds 16S rRNA, required for the assembly of 30S particles. In Zygnema circumcarinatum (Green alga), this protein is Small ribosomal subunit protein uS14c.